A 368-amino-acid polypeptide reads, in one-letter code: (Iso)eugenol O-methyltransferase (368 aa).

Positions 1–2 are excised as a propeptide; the sequence is MG. S-adenosyl-L-methionine contacts are provided by residues Ser187, 211–212, Asp234, 254–255, and Lys268; these read GG and DM. Residue His272 is the Proton acceptor of the active site.

The protein belongs to the class I-like SAM-binding methyltransferase superfamily. Cation-independent O-methyltransferase family. COMT subfamily. As to quaternary structure, homodimer. Expressed in petals, style and stamens, but not in stigma, sepals, leaves or stem tissues.

It carries out the reaction (E)-isoeugenol + S-adenosyl-L-methionine = (E)-isomethyleugenol + S-adenosyl-L-homocysteine + H(+). Its function is as follows. Catalyzes the methylation of the para-4-hydroxyl of both eugenol and (iso)eugenol to methyleugenol and isomethyleugenol, respectively. The resulting products are part of a complex mixture of low-molecular-weight volatile compounds emitted by the flowers to attract pollinators. This Clarkia breweri (Fairy fans) protein is (Iso)eugenol O-methyltransferase (IEMT1).